The chain runs to 292 residues: Cyclin-dependent kinase A-2 (292 aa).

The 283-residue stretch at 4-286 folds into the Protein kinase domain; sequence YEKVEKIGEG…ARAALEHEYF (283 aa). ATP contacts are provided by residues 10 to 18 and lysine 33; that span reads IGEGTYGVV. Threonine 14 is subject to Phosphothreonine. Phosphotyrosine is present on tyrosine 15. Aspartate 126 acts as the Proton acceptor in catalysis. A Phosphothreonine modification is found at threonine 160.

Belongs to the protein kinase superfamily. CMGC Ser/Thr protein kinase family. CDC2/CDKX subfamily. As to expression, expressed in the dividing region of the root apex and in differentiated cells such as those in the sclerenchyma, pericycle and parenchyma of the central cylinder. Expressed in the intercalary meristem and the elongation zone of internodes.

It carries out the reaction L-seryl-[protein] + ATP = O-phospho-L-seryl-[protein] + ADP + H(+). It catalyses the reaction L-threonyl-[protein] + ATP = O-phospho-L-threonyl-[protein] + ADP + H(+). The enzyme catalyses [DNA-directed RNA polymerase] + ATP = phospho-[DNA-directed RNA polymerase] + ADP + H(+). This is Cyclin-dependent kinase A-2 (CDKA-2) from Oryza sativa subsp. japonica (Rice).